The following is a 447-amino-acid chain: N-succinylarginine dihydrolase (447 aa).

Substrate is bound by residues 19-28 (AGLSFGNEAS), Asn110, and 137-138 (HR). Residue Glu174 is part of the active site. Residue Arg214 coordinates substrate. The active site involves His250. The substrate site is built by Asp252 and Asn365. Catalysis depends on Cys371, which acts as the Nucleophile.

The protein belongs to the succinylarginine dihydrolase family. In terms of assembly, homodimer.

It carries out the reaction N(2)-succinyl-L-arginine + 2 H2O + 2 H(+) = N(2)-succinyl-L-ornithine + 2 NH4(+) + CO2. It participates in amino-acid degradation; L-arginine degradation via AST pathway; L-glutamate and succinate from L-arginine: step 2/5. Functionally, catalyzes the hydrolysis of N(2)-succinylarginine into N(2)-succinylornithine, ammonia and CO(2). The polypeptide is N-succinylarginine dihydrolase (Acinetobacter baumannii (strain ACICU)).